Reading from the N-terminus, the 122-residue chain is uncharacterized protein (122 aa).

Its subcellular location is the mitochondrion. This is an uncharacterized protein from Arabidopsis thaliana (Mouse-ear cress).